The chain runs to 874 residues: Alanine--tRNA ligase (874 aa).

Zn(2+) contacts are provided by H563, H567, C665, and H669.

The protein belongs to the class-II aminoacyl-tRNA synthetase family. Zn(2+) serves as cofactor.

It is found in the cytoplasm. It catalyses the reaction tRNA(Ala) + L-alanine + ATP = L-alanyl-tRNA(Ala) + AMP + diphosphate. In terms of biological role, catalyzes the attachment of alanine to tRNA(Ala) in a two-step reaction: alanine is first activated by ATP to form Ala-AMP and then transferred to the acceptor end of tRNA(Ala). Also edits incorrectly charged Ser-tRNA(Ala) and Gly-tRNA(Ala) via its editing domain. This is Alanine--tRNA ligase from Haemophilus ducreyi (strain 35000HP / ATCC 700724).